The sequence spans 302 residues: Elongation factor Ts (302 aa).

The tract at residues 82–85 (TDFV) is involved in Mg(2+) ion dislocation from EF-Tu.

This sequence belongs to the EF-Ts family.

It is found in the cytoplasm. In terms of biological role, associates with the EF-Tu.GDP complex and induces the exchange of GDP to GTP. It remains bound to the aminoacyl-tRNA.EF-Tu.GTP complex up to the GTP hydrolysis stage on the ribosome. The chain is Elongation factor Ts from Nitrosospira multiformis (strain ATCC 25196 / NCIMB 11849 / C 71).